The sequence spans 373 residues: UDP-sugar transporter UST74c (373 aa).

The tract at residues 27 to 49 (LEEKMGGSADRSSLLDGSGSKEL) is disordered. S50 carries the post-translational modification Phosphoserine. Transmembrane regions (helical) follow at residues 89 to 111 (HFPS…LGMG), 131 to 153 (FPLP…TLSL), 174 to 196 (ILGL…GALL), 206 to 225 (MRGY…NGVY), 238 to 260 (YGLM…YVTG), 275 to 297 (VFVV…TILC), 302 to 324 (SALT…GMFI), and 329 to 351 (VFSW…YTYV).

It belongs to the TPT transporter family. SLC35D subfamily.

Its subcellular location is the golgi apparatus membrane. In terms of biological role, involved in the import of UDP-sugars from the cytoplasm into the Golgi lumen. The polypeptide is UDP-sugar transporter UST74c (frc) (Drosophila melanogaster (Fruit fly)).